The sequence spans 1141 residues: DNA-directed RNA polymerase subunit beta (1141 aa).

This sequence belongs to the RNA polymerase beta chain family. In terms of assembly, the RNAP catalytic core consists of 2 alpha, 1 beta, 1 beta' and 1 omega subunit. When a sigma factor is associated with the core the holoenzyme is formed, which can initiate transcription.

It catalyses the reaction RNA(n) + a ribonucleoside 5'-triphosphate = RNA(n+1) + diphosphate. In terms of biological role, DNA-dependent RNA polymerase catalyzes the transcription of DNA into RNA using the four ribonucleoside triphosphates as substrates. This Frankia alni (strain DSM 45986 / CECT 9034 / ACN14a) protein is DNA-directed RNA polymerase subunit beta.